We begin with the raw amino-acid sequence, 350 residues long: Beta-hexosaminidase (350 aa).

Substrate is bound by residues aspartate 73, arginine 81, arginine 148, and 178–179 (KH). The Proton donor/acceptor role is filled by histidine 191. Aspartate 262 acts as the Nucleophile in catalysis.

The protein belongs to the glycosyl hydrolase 3 family. NagZ subfamily.

Its subcellular location is the cytoplasm. The catalysed reaction is Hydrolysis of terminal non-reducing N-acetyl-D-hexosamine residues in N-acetyl-beta-D-hexosaminides.. Its pathway is cell wall biogenesis; peptidoglycan recycling. Its function is as follows. Plays a role in peptidoglycan recycling by cleaving the terminal beta-1,4-linked N-acetylglucosamine (GlcNAc) from peptide-linked peptidoglycan fragments, giving rise to free GlcNAc, anhydro-N-acetylmuramic acid and anhydro-N-acetylmuramic acid-linked peptides. This is Beta-hexosaminidase from Bordetella avium (strain 197N).